Reading from the N-terminus, the 183-residue chain is Outer membrane protein H.8 (183 aa).

Positions 1-17 (MKAYLALISAAVIGLAA) are cleaved as a signal peptide. Cys-18 is lipidated: N-palmitoyl cysteine. Residue Cys-18 is the site of S-diacylglycerol cysteine attachment. The segment at 27-51 (AEATPAAEAPASEAPAAEAAPADAA) is disordered. The Plastocyanin-like domain occupies 57–183 (GNCAATVESN…LMNGKVTLVD (127 aa)). Positions 102, 166, 171, and 175 each coordinate Cu cation.

The cofactor is Cu cation.

It is found in the cell outer membrane. This chain is Outer membrane protein H.8, found in Neisseria meningitidis serogroup C / serotype 2a (strain ATCC 700532 / DSM 15464 / FAM18).